The following is a 464-amino-acid chain: Glycine receptor subunit alpha-3 (464 aa).

Positions 1–33 are cleaved as a signal peptide; that stretch reads MAHVRHFRTLLSGFYFWEAALLLSLVATKETNS. Residues 34–255 lie on the Extracellular side of the membrane; the sequence is ARSRSAPMSP…RFHLERQMGY (222 aa). N-linked (GlcNAc...) asparagine glycosylation is present at Asn71. Cys171 and Cys185 are disulfide-bonded. The Zn(2+) site is built by Glu225 and Asp227. The cysteines at positions 231 and 242 are disulfide-linked. Strychnine is bound at residue 235-240; sequence YNTGKF. His248 contacts Zn(2+). A helical membrane pass occupies residues 256 to 277; sequence YLIQMYIPSLLIVILSWVSFWI. Over 278-282 the chain is Cytoplasmic; the sequence is NMDAA. A helical transmembrane segment spans residues 283–303; the sequence is PARVALGITTVLTMTTQSSGS. Residues 304–314 lie on the Extracellular side of the membrane; it reads RASLPKVSYVK. Residues 315-335 traverse the membrane as a helical segment; that stretch reads AIDIWMAVCLLFVFSALLEYA. At 336–430 the chain is on the cytoplasmic side; that stretch reads AVNFVSRQHK…FIDRAKKIDT (95 aa). Ser370 carries the post-translational modification Phosphoserine. Phosphoserine; by PKA is present on Ser379. Residues 431–451 form a helical membrane-spanning segment; sequence ISRACFPLAFLIFNIFYWVIY. Topologically, residues 452–464 are extracellular; it reads KILRHEDIHHQQD.

This sequence belongs to the ligand-gated ion channel (TC 1.A.9) family. Glycine receptor (TC 1.A.9.3) subfamily. GLRA3 sub-subfamily. Homopentamer (in vitro). Heteropentamer composed of GLRA3 and GLRB. Both homopentamers and heteropentamers form functional ion channels, but their characteristics are subtly different. Phosphorylated by PKA; this causes down-regulation of channel activity.

It is found in the postsynaptic cell membrane. The protein resides in the perikaryon. Its subcellular location is the cell projection. The protein localises to the dendrite. It localises to the synapse. It is found in the cell membrane. The enzyme catalyses chloride(in) = chloride(out). With respect to regulation, low levels of Zn(2+) ions (1 uM) increase glycine sensitivity and decrease the glycine concentration required for half-maximal channel activity. Channel activity is strongly enhanced by ethanol. Inhibited by picrotoxin. Inhibited by prostaglandin E2, probably via PKA-mediated phosphorylation at Ser-379. In terms of biological role, glycine receptors are ligand-gated chloride channels. Channel opening is triggered by extracellular glycine. Channel characteristics depend on the subunit composition; heteropentameric channels display faster channel closure. Plays an important role in the down-regulation of neuronal excitability. Contributes to the generation of inhibitory postsynaptic currents. Contributes to increased pain perception in response to increased prostaglandin E2 levels. Plays a role in cellular responses to ethanol. The sequence is that of Glycine receptor subunit alpha-3 (Glra3) from Rattus norvegicus (Rat).